Here is a 158-residue protein sequence, read N- to C-terminus: Crossover junction endodeoxyribonuclease RuvC (158 aa).

Residues D7, E67, and D140 contribute to the active site. Mg(2+) is bound by residues D7, E67, and D140.

The protein belongs to the RuvC family. Homodimer which binds Holliday junction (HJ) DNA. The HJ becomes 2-fold symmetrical on binding to RuvC with unstacked arms; it has a different conformation from HJ DNA in complex with RuvA. In the full resolvosome a probable DNA-RuvA(4)-RuvB(12)-RuvC(2) complex forms which resolves the HJ. Requires Mg(2+) as cofactor.

It localises to the cytoplasm. The catalysed reaction is Endonucleolytic cleavage at a junction such as a reciprocal single-stranded crossover between two homologous DNA duplexes (Holliday junction).. Functionally, the RuvA-RuvB-RuvC complex processes Holliday junction (HJ) DNA during genetic recombination and DNA repair. Endonuclease that resolves HJ intermediates. Cleaves cruciform DNA by making single-stranded nicks across the HJ at symmetrical positions within the homologous arms, yielding a 5'-phosphate and a 3'-hydroxyl group; requires a central core of homology in the junction. The consensus cleavage sequence is 5'-(A/T)TT(C/G)-3'. Cleavage occurs on the 3'-side of the TT dinucleotide at the point of strand exchange. HJ branch migration catalyzed by RuvA-RuvB allows RuvC to scan DNA until it finds its consensus sequence, where it cleaves and resolves the cruciform DNA. This is Crossover junction endodeoxyribonuclease RuvC from Dictyoglomus thermophilum (strain ATCC 35947 / DSM 3960 / H-6-12).